Consider the following 120-residue polypeptide: Nitrogen regulatory protein GlnK3 (120 aa).

Residues Thr40 and 48–50 (GEQ) contribute to the ADP site. ATP is bound by residues Thr40 and 48 to 50 (GEQ). 2-oxoglutarate-binding positions include 48–52 (GEQKG) and Lys69. Residues Val75 and 98–101 (GDGR) contribute to the ADP site. ATP-binding positions include Val75 and 98–101 (GDGR). Gly98 lines the 2-oxoglutarate pocket.

It belongs to the P(II) protein family. As to quaternary structure, homotrimer. Interacts and forms a complex with Amt3.

The protein resides in the cytoplasm. Its activity is regulated as follows. Activity is influenced by intracellular pools of the effector molecules ATP, ADP and 2-oxoglutarate. It senses the cellular nitrogen status through 2-oxoglutarate, and the energy level of the cell by binding both ATP and ADP with different affinities. ATP and 2-oxoglutarate prohibit binding to Amt3. ADP promotes the complex formation. Functionally, involved in the regulation of nitrogen metabolism. Regulates the activity of its targets by protein-protein interaction in response to the nitrogen status of the cell. Regulates the activity of the ammonia channel Amt3 via direct interaction. In Archaeoglobus fulgidus (strain ATCC 49558 / DSM 4304 / JCM 9628 / NBRC 100126 / VC-16), this protein is Nitrogen regulatory protein GlnK3.